The chain runs to 66 residues: Large ribosomal subunit protein bL33c (66 aa).

Belongs to the bacterial ribosomal protein bL33 family.

Its subcellular location is the plastid. It localises to the chloroplast. The sequence is that of Large ribosomal subunit protein bL33c from Arabis hirsuta (Hairy rock-cress).